Consider the following 1249-residue polypeptide: Cilia- and flagella-associated protein 57 (1249 aa).

8 WD repeats span residues 105 to 148 (FQVQ…AIIK), 195 to 233 (GESS…WETS), 335 to 374 (SDKQ…ISKG), 386 to 425 (LHSA…LELY), 427 to 469 (EYQE…KEYS), 471 to 506 (RGCK…NINI), 509 to 548 (GHTG…RETE), and 635 to 674 (AHAG…GRGI). Coiled coils occupy residues 690-1056 (KTDM…KTDL) and 1094-1165 (SDLQ…SALK).

Belongs to the CFAP57 family. In terms of assembly, may form homodimers. Associates with components of the nexin-dynein regulatory complex (N-DRC) and the CFAP184:CFAP263 complex. As to expression, predominanly expressed in testis, lung and skin. Weak expression in brain and kidney.

It is found in the cytoplasm. It localises to the cytoskeleton. The protein resides in the cilium axoneme. Functionally, associates with components of the nexin-dynein regulatory complex (N-DRC), a key regulator of ciliary/flagellar motility, and might act as an inner dynein arm (IDA) hub or linkage. This chain is Cilia- and flagella-associated protein 57, found in Mus musculus (Mouse).